The chain runs to 578 residues: Maltogenic alpha-amylase (578 aa).

The protein belongs to the glycosyl hydrolase 13 family.

The enzyme catalyses hydrolysis of (1-&gt;4)-alpha-D-glucosidic linkages in polysaccharides so as to remove successive alpha-maltose residues from the non-reducing ends of the chains.. Functionally, converts starch into maltose. In contrary to other maltogenic alpha-amylases BlmA cannot hydrolyze 1,4-alpha-glucosidic linkage next to 1,6-alpha-glucosidic linkages. This Bacillus licheniformis protein is Maltogenic alpha-amylase (blmA).